A 112-amino-acid polypeptide reads, in one-letter code: UPF0122 protein CPR_1686 (112 aa).

It belongs to the UPF0122 family.

In terms of biological role, might take part in the signal recognition particle (SRP) pathway. This is inferred from the conservation of its genetic proximity to ftsY/ffh. May be a regulatory protein. In Clostridium perfringens (strain SM101 / Type A), this protein is UPF0122 protein CPR_1686.